Consider the following 564-residue polypeptide: 3beta-hydroxysteroid-dehydrogenase/decarboxylase isoform 2 (564 aa).

An NAD(+)-binding site is contributed by 16–21; sequence GGRGFA. N-linked (GlcNAc...) asparagine glycosylation is found at N146 and N158. NAD(+)-binding residues include Y161 and K165. The active-site Proton donor is the K165. Residues 384–564 enclose the Reticulon domain; it reads VADTLLWKDL…EKLFGSKKHD (181 aa). Transmembrane regions (helical) follow at residues 398–418 and 424–444; these read IAIF…STVV and ALLV…KIFG. An N-linked (GlcNAc...) asparagine glycan is attached at N474. 2 consecutive transmembrane segments (helical) span residues 486-506 and 507-527; these read GNDW…SLAG and AISL…AFLV.

The protein belongs to the 3-beta-HSD family.

It localises to the endoplasmic reticulum membrane. It catalyses the reaction a 3beta-hydroxysteroid-4alpha-carboxylate + NAD(+) = a 3-oxosteroid + CO2 + NADH. The catalysed reaction is 4alpha-carboxy-4beta,14alpha-dimethyl-9beta,19-cyclo-5alpha-ergost-24(24(1))-en-3beta-ol + NAD(+) = cycloeucalenone + CO2 + NADH. It participates in steroid biosynthesis; zymosterol biosynthesis; zymosterol from lanosterol: step 4/6. 3beta-hydroxysteroid-dehydrogenase/decarboxylase involved in sterol synthesis. Catalyzes the formation of 3-oxosteroids from 3beta-hydroxysteroids-4alpha-carboxylate. Involved in the regulation of inflorescence internodes and leaves growth, probably by affecting auxin transporter activity possibly by altering sterol composition in the membranes. This is 3beta-hydroxysteroid-dehydrogenase/decarboxylase isoform 2 from Arabidopsis thaliana (Mouse-ear cress).